The chain runs to 191 residues: Peptidyl-tRNA hydrolase (191 aa).

TRNA is bound at residue Tyr14. His19 (proton acceptor) is an active-site residue. The tRNA site is built by Tyr64, Asn66, and Asn112.

Belongs to the PTH family. As to quaternary structure, monomer.

The protein localises to the cytoplasm. It catalyses the reaction an N-acyl-L-alpha-aminoacyl-tRNA + H2O = an N-acyl-L-amino acid + a tRNA + H(+). Its function is as follows. Hydrolyzes ribosome-free peptidyl-tRNAs (with 1 or more amino acids incorporated), which drop off the ribosome during protein synthesis, or as a result of ribosome stalling. Catalyzes the release of premature peptidyl moieties from peptidyl-tRNA molecules trapped in stalled 50S ribosomal subunits, and thus maintains levels of free tRNAs and 50S ribosomes. The chain is Peptidyl-tRNA hydrolase from Clostridium botulinum (strain Eklund 17B / Type B).